We begin with the raw amino-acid sequence, 2241 residues long: GON-4-like protein (2241 aa).

Disordered stretches follow at residues 1–46 and 122–259; these read MLPC…SSVS and KLHA…GRGQ. The segment covering 30-40 has biased composition (basic and acidic residues); that stretch reads SAVKPESDQVK. Basic residues predominate over residues 122–135; it reads KLHATGSKRGKKMT. Residues 143–152 are compositionally biased toward basic and acidic residues; sequence QEDRCDHLTL. The span at 183 to 201 shows a compositional bias: polar residues; sequence PSGSQSAKPVSQPRKSTQP. Serine 206 bears the Phosphoserine mark. The span at 243–255 shows a compositional bias: basic residues; the sequence is RRKKKKGTKRKRD. Phosphoserine is present on serine 346. Residues 366-394 are compositionally biased toward acidic residues; it reads EDDSSDEEYQPDDEEEDETAEESLLESDV. Positions 366 to 460 are disordered; that stretch reads EDDSSDEEYQ…PPKPKQTRDS (95 aa). The segment at 600 to 1339 is required for interaction with YY1, SIN3A and HDAC1, and transcriptional repression activity; the sequence is EMGFSNMEDD…EEAREEISGS (740 aa). Serine 775 carries the post-translational modification Phosphoserine. 2 disordered regions span residues 1008-1031 and 1111-1131; these read PSPS…SEAP and RKPY…SPCM. Residues 1111-1125 are compositionally biased toward basic residues; sequence RKPYVRRRPSKRRGV. Serine 1268 bears the Phosphoserine mark. Disordered regions lie at residues 1301-1320 and 1356-1601; these read ALEP…TPGD and LDTG…RARA. Over residues 1386 to 1416 the composition is skewed to polar residues; it reads PTKTPSSSQEPPDEGTSGTDVNKGSSKNALS. At serine 1426 the chain carries Phosphoserine. The span at 1434–1443 shows a compositional bias: polar residues; it reads SSSVDGQSVG. 2 stretches are compositionally biased toward acidic residues: residues 1458-1476 and 1510-1534; these read EEEE…EDEM and GESE…EAEG. Residues 1586-1600 are compositionally biased toward basic residues; the sequence is RNNHRARNKRGSRAR. 2 PAH domains span residues 1624–1696 and 1706–1777; these read EQKD…LLPE and EQQA…FDHL. Residues 1809–1960 form a disordered region; that stretch reads PDVEEEEEPP…AVGSTLPSPR (152 aa). 2 stretches are compositionally biased toward basic and acidic residues: residues 1836–1848 and 1879–1901; these read NHDK…DGAK and CDSK…HREA. A phosphoserine mark is found at serine 1896, serine 1902, and serine 1977. 3 disordered regions span residues 2002–2025, 2039–2149, and 2208–2241; these read EVRS…AVSE, EKLP…VSST, and CEAS…ELDE. Serine 2107 bears the Phosphoserine mark. The segment covering 2140-2149 has biased composition (polar residues); it reads CANNSKVSST. One can recognise a Myb-like domain in the interval 2148–2201; it reads STGEKVVLWTREADRVILTMCQEQGAQPQTFNIISQQLGNKTPAEVSHRFRELM.

As to quaternary structure, found in a complex with YY1, SIN3A and HDAC1.

It is found in the nucleus. Has transcriptional repressor activity, probably as part of a complex with YY1, SIN3A and HDAC1. Required for B cell lymphopoiesis. The polypeptide is GON-4-like protein (GON4L) (Homo sapiens (Human)).